An 877-amino-acid polypeptide reads, in one-letter code: Alanine--tRNA ligase (877 aa).

Residues H566, H570, C668, and H672 each coordinate Zn(2+).

The protein belongs to the class-II aminoacyl-tRNA synthetase family. Zn(2+) is required as a cofactor.

It localises to the cytoplasm. The catalysed reaction is tRNA(Ala) + L-alanine + ATP = L-alanyl-tRNA(Ala) + AMP + diphosphate. Functionally, catalyzes the attachment of alanine to tRNA(Ala) in a two-step reaction: alanine is first activated by ATP to form Ala-AMP and then transferred to the acceptor end of tRNA(Ala). Also edits incorrectly charged Ser-tRNA(Ala) and Gly-tRNA(Ala) via its editing domain. This chain is Alanine--tRNA ligase, found in Staphylococcus aureus (strain USA300 / TCH1516).